We begin with the raw amino-acid sequence, 1371 residues long: Serine protease pic autotransporter (1371 aa).

Residues 1–55 form the signal peptide; the sequence is MNKVYSLKYCPVTGGLIVVSELASRVIKKTCRRLTHILLAGIPAVYLYYPQISQA. Positions 56–301 constitute a Peptidase S6 domain; sequence GIVRSDIAYQ…NVIPTDYLNQ (246 aa). Catalysis depends on charge relay system residues H127, D155, and S258. In terms of domain architecture, Autotransporter spans 1105-1371; that stretch reads DTNGDAGAWA…AVNANFRYMF (267 aa).

Post-translationally, cleaved to release the mature protein from the outer membrane.

It localises to the periplasm. Its subcellular location is the secreted. It is found in the cell surface. The protein localises to the cell outer membrane. Its function is as follows. Involved in virulence of uropathogenic E.coli although it is not known how it contributes to it. Has no mucinase activity. The sequence is that of Serine protease pic autotransporter (pic) from Escherichia coli O6:H1 (strain CFT073 / ATCC 700928 / UPEC).